Consider the following 418-residue polypeptide: MGNITRKGSRDLVVDSAKSLEDGPSAALHSKLYEAIMREDCTTIEVLLRNHPVNQPITILPNSASNRLLLTQPTESIIPIHLAAKYHKAQSLLCLLRHGADPEVRDTTGLTTLNLMLLHWPVTSTTWAKPGNRTHRILTDIQNSSITCLRILCAHGAQVNTQGEISNKRSPLHLAIAYGCYPVLSILTQNGADVNAINEASMTPLHMAANMLNKEMMETLIAYGANVNCAVSSTGNTPLKLAVCTASSKAGRLLGAGVSCIRLLLTHGAKVNAQDYKGQTAIHEACFGGREAIINLLLEFEANVNILTRNGESPIYMYLQRSCNVRDTALLARLLYHTYPLRMTNNQGILPAGIMLPEFRLLRDTLIKQSQKPLSLQGICKRNIRNIYGEKYKQHLKQFLPVTIWNSVYCCYDLAYTS.

ANK repeat units lie at residues A27–I57, E75–V104, N132–T161, N167–A196, A200–C229, T234–A273, K277–I306, and N310–M343.

The polypeptide is Ankyrin repeat domain-containing protein 61 (ANKRD61) (Homo sapiens (Human)).